A 183-amino-acid polypeptide reads, in one-letter code: Large ribosomal subunit protein bL32m (183 aa).

The N-terminal 71 residues, 1–71 (MNSLIFGKQL…DFFSNNGILL (71 aa)), are a transit peptide targeting the mitochondrion. Zn(2+) contacts are provided by cysteine 104, cysteine 107, cysteine 117, and cysteine 120.

This sequence belongs to the bacterial ribosomal protein bL32 family. In terms of assembly, component of the mitochondrial large ribosomal subunit (mt-LSU). Mature yeast 74S mitochondrial ribosomes consist of a small (37S) and a large (54S) subunit. The 37S small subunit contains a 15S ribosomal RNA (15S mt-rRNA) and 34 different proteins. The 54S large subunit contains a 21S rRNA (21S mt-rRNA) and 46 different proteins. bL32m has a zinc binding site. In terms of processing, MRPL32 precursor is processed by the m-AAA protease (composed of YTA12/RCA1 and YTA10/AFG3), which cleaves the N-terminal transit peptide. Cleavage by the m-AAA protease takes place prior to assembly into the large subunit, an essential step for mitochondrial ribosome (mitoribosome) assembly. Proper processing by the m-AAA protease is dependent on the zinc-binding region within the tightly folded C-terminal domain of MRPL32: zinc-dependent folding halts degradation initiated from the N-terminus and triggers the release of mature MRPL32.

The protein resides in the mitochondrion. In terms of biological role, component of the mitochondrial ribosome (mitoribosome), a dedicated translation machinery responsible for the synthesis of mitochondrial genome-encoded proteins, including at least some of the essential transmembrane subunits of the mitochondrial respiratory chain. The mitoribosomes are attached to the mitochondrial inner membrane and translation products are cotranslationally integrated into the membrane. The polypeptide is Large ribosomal subunit protein bL32m (Saccharomyces cerevisiae (strain ATCC 204508 / S288c) (Baker's yeast)).